A 484-amino-acid chain; its full sequence is UDP-N-acetylmuramoyl-L-alanyl-D-glutamate--L-lysine ligase (484 aa).

Serine 43 is a binding site for UDP-N-acetyl-alpha-D-muramoyl-L-alanyl-D-glutamate. Glycine 119 to threonine 125 provides a ligand contact to ATP. UDP-N-acetyl-alpha-D-muramoyl-L-alanyl-D-glutamate-binding positions include threonine 161–threonine 162, serine 188, and arginine 196. An N6-carboxylysine modification is found at lysine 230. An L-lysine recognition motif motif is present at residues aspartate 405 to asparagine 408.

The protein belongs to the MurCDEF family. MurE subfamily. Carboxylation is probably crucial for Mg(2+) binding and, consequently, for the gamma-phosphate positioning of ATP.

Its subcellular location is the cytoplasm. The enzyme catalyses UDP-N-acetyl-alpha-D-muramoyl-L-alanyl-D-glutamate + L-lysine + ATP = UDP-N-acetyl-alpha-D-muramoyl-L-alanyl-gamma-D-glutamyl-L-lysine + ADP + phosphate + H(+). The protein operates within cell wall biogenesis; peptidoglycan biosynthesis. Its function is as follows. Catalyzes the addition of L-lysine to the nucleotide precursor UDP-N-acetylmuramoyl-L-alanyl-D-glutamate (UMAG) in the biosynthesis of bacterial cell-wall peptidoglycan. The polypeptide is UDP-N-acetylmuramoyl-L-alanyl-D-glutamate--L-lysine ligase (Streptococcus agalactiae serotype III (strain NEM316)).